Consider the following 481-residue polypeptide: Matrilin-3 (481 aa).

The N-terminal stretch at 1–27 (MLLSAPLRHLPGLLLLLWPLLLLPSLA) is a signal peptide. The 176-residue stretch at 78 to 253 (DLVFIIDSSR…GVIEKLSARF (176 aa)) folds into the VWFA domain. Arg193 is modified (omega-N-methylarginine). EGF-like domains are found at residues 259 to 300 (ALDQ…KTCS), 301 to 342 (AIDK…RTCA), 343 to 384 (ALDK…KTCS), and 385 to 426 (VRNK…KTCS). Cystine bridges form between Cys263–Cys274, Cys270–Cys284, Cys286–Cys299, Cys305–Cys316, Cys312–Cys326, Cys328–Cys341, Cys347–Cys358, Cys354–Cys368, Cys370–Cys383, Cys389–Cys400, Cys396–Cys410, and Cys412–Cys425. Asn321 is a glycosylation site (N-linked (GlcNAc...) asparagine). A Phosphoserine; by FAM20C modification is found at Ser436. Positions 451 to 475 (EKVSSHLQKLNTKLDNILKKLKVTE) form a coiled coil.

Can form homooligomers (monomers, dimers, trimers and tetramers) and heterooligomers with matrilin-1. Interacts with COMP. Component of a complex containing at least CRELD2, MANF, MATN3 and PDIA4. In terms of tissue distribution, strongly expressed in growing skeletal tissue such as epiphyseal growth plate or in bone undergoing growth and remodeling. In the bone, actively synthesized in osteoblasts and osteocytes. Expressed in cartilage of sternum, femur, vertebrae, trachea, articular and epiphyseal cartilage, cartilage of developing bones and bones.

The protein localises to the secreted. In terms of biological role, major component of the extracellular matrix of cartilage and may play a role in the formation of extracellular filamentous networks. The polypeptide is Matrilin-3 (Matn3) (Mus musculus (Mouse)).